The chain runs to 340 residues: Entry-fusion complex protein OPG094 (340 aa).

Gly2 carries N-myristoyl glycine; by host lipidation. Over 2-319 (GGRVSVELPK…VQHNIKHSFD (318 aa)) the chain is Virion surface. A helical; Signal-anchor for type II membrane protein transmembrane segment spans residues 320-340 (LKLHLISLLSLLVIWILIVAI).

This sequence belongs to the orthopoxvirus OPG086 family. In terms of assembly, interacts with OPG143. Component of the entry fusion complex (EFC) composed of OPG053, OPG076, OPG086, OPG094, OPG095, OPG099, OPG107, OPG143, OPG104, OPG147 and OPG155. Except for OPG095 and OPG053, each of the EFC proteins is required for assembly or stability of the complex. Post-translationally, unglycosylated because produced in viral factories instead of the classic ER -Golgi route.

It localises to the virion membrane. In terms of biological role, component of the entry fusion complex (EFC), which consists of 11 proteins. During cell infection, this complex mediates entry of the virion core into the host cytoplasm by a two-step mechanism consisting of lipid mixing of the viral and cellular membranes and subsequent pore formation. The polypeptide is Entry-fusion complex protein OPG094 (OPG094) (Homo sapiens (Human)).